The chain runs to 214 residues: CASP-like protein 0U1 (214 aa).

The Cytoplasmic segment spans residues 1–82; the sequence is MATSEAPLLK…GFTSFYQFKG (82 aa). The helical transmembrane segment at 83 to 103 threads the bilayer; the sequence is VVGVYAAFWVYTVLLIGLYLF. The Extracellular portion of the chain corresponds to 104 to 112; that stretch reads SRGPPPGTE. Residues 113–133 form a helical membrane-spanning segment; the sequence is FVVHALFTLCMIAFVSLSVIS. At 134-153 the chain is on the cytoplasmic side; sequence CTSTVIESDYSVCKNAAYAK. A helical membrane pass occupies residues 154–174; that stretch reads ASLVFAALVVVLNCATCAFVF. At 175–214 the chain is on the extracellular side; that stretch reads KQWRSLQFVGMPENFRPFGRHRHKHGHHAGDADDAIPTHP. The tract at residues 194-214 is disordered; that stretch reads RHRHKHGHHAGDADDAIPTHP.

Belongs to the Casparian strip membrane proteins (CASP) family. In terms of assembly, homodimer and heterodimers.

The protein resides in the cell membrane. The polypeptide is CASP-like protein 0U1 (Ostreococcus tauri).